The primary structure comprises 213 residues: MKSLQALFGGTFDPVHYGHLKPVETLANLIGLSRVIIMPNNVPPHRPQPEASSAQRKYMLELAIADKPLFILDERELKRDTASYTAQTLKEWREEQGPDAPLAFIIGQDSLLTFPTWHDYETILDNTHLIVCRRPGYPLEMVKEQHQQWLERHLTHTPDDLHALPAGKIYLAETPWFNISATLIRERLEKGEPCDDLMPESVLNYINQQGLYR.

It belongs to the NadD family.

The enzyme catalyses nicotinate beta-D-ribonucleotide + ATP + H(+) = deamido-NAD(+) + diphosphate. It participates in cofactor biosynthesis; NAD(+) biosynthesis; deamido-NAD(+) from nicotinate D-ribonucleotide: step 1/1. In terms of biological role, catalyzes the reversible adenylation of nicotinate mononucleotide (NaMN) to nicotinic acid adenine dinucleotide (NaAD). In Citrobacter koseri (strain ATCC BAA-895 / CDC 4225-83 / SGSC4696), this protein is Probable nicotinate-nucleotide adenylyltransferase.